Here is a 438-residue protein sequence, read N- to C-terminus: MRISIFGLGYVGAVCAGCLSARGHDVVGVDISSTKIDLINNGKSPIVEPGLEELLQKGLATGKLRGTTDFAEAIRATDLSMICVGTPSKKNGDLELDYIESVCREIGYVLRDKNTRHTIVVRSTVLPGTVANVVIPILEDCSGKKAGVDFGVAVNPEFLRESTAIKDYDLPPMTVIGEFDKASGDVLQSLYEELDAPIIRKDIAVAEMIKYTCNVWHATKVTFANEIGNIAKAVGVDGREVMDVVCQDKALNLSQYYMRPGFAFGGSCLPKDVRALTYRAGSLDVDAPLLNSLMRSNTSQVQNAFDMVASYDTRKVALLGLSFKAGTDDLRESPLVELAEMLIGKGFDLSIFDSNVEYARVHGANKDYIESKIPHVSSLLNSDFDQVINDSDVIILGNRDERFRSLANKTPEGKRVIDLVGFMTNATTEDGRAEGICW.

NAD(+) is bound by residues Tyr-10, Val-11, Asp-30, Lys-35, Thr-86, and Thr-124. Glu-161, Lys-210, Asn-214, His-217, Asn-225, Tyr-256, Tyr-257, Arg-259, Phe-262, and Gly-265 together coordinate GDP-alpha-D-mannuronate. The active site involves Cys-268. Position 271 (Lys-271) interacts with NAD(+). Lys-324 provides a ligand contact to GDP-alpha-D-mannuronate. Arg-331 contacts NAD(+).

The protein belongs to the UDP-glucose/GDP-mannose dehydrogenase family.

The enzyme catalyses GDP-alpha-D-mannose + 2 NAD(+) + H2O = GDP-alpha-D-mannuronate + 2 NADH + 3 H(+). It participates in glycan biosynthesis; alginate biosynthesis. Functionally, catalyzes the oxidation of guanosine diphospho-D-mannose (GDP-D-mannose) to GDP-D-mannuronic acid, a precursor for alginate polymerization. The alginate layer causes a mucoid phenotype and provides a protective barrier against host immune defenses and antibiotics. The polypeptide is GDP-mannose 6-dehydrogenase (algD) (Pseudomonas syringae pv. tomato (strain ATCC BAA-871 / DC3000)).